A 574-amino-acid chain; its full sequence is Pescadillo homolog (574 aa).

Residues 289–312 form a disordered region; that stretch reads PSEPNDDTEVDEFPADPENAGLEE. A compositionally biased stretch (acidic residues) spans 292–303; the sequence is PNDDTEVDEFPA. Residues 323 to 416 form the BRCT domain; the sequence is KHKSLFVGLK…LLLPVEDYFP (94 aa). Residues 452–486 form a disordered region; the sequence is LGLDEEDDDDDDDDEEEDDDDDEEEEDKKLRQLEN. Over residues 453–477 the composition is skewed to acidic residues; that stretch reads GLDEEDDDDDDDDEEEDDDDDEEEE.

This sequence belongs to the pescadillo family. In terms of assembly, component of the PeBoW complex, composed of bop1, pes1 and wdr12. The complex is held together by bop1, which interacts with pes1 via its N-terminal domain and with wdr12 via a high-affinity interaction between the seven-bladed beta-propeller domains of the 2 proteins. The PeBoW complex associates with the 66S pre-ribosome.

It localises to the nucleus. Its subcellular location is the nucleolus. The protein resides in the nucleoplasm. Functionally, component of the PeBoW complex, which is required for maturation of 28S and 5.8S ribosomal RNAs and formation of the 60S ribosome. Required for neural crest migration and eye development. This is Pescadillo homolog (pes1) from Xenopus laevis (African clawed frog).